The primary structure comprises 339 residues: Ketol-acid reductoisomerase (NADP(+)) (339 aa).

The KARI N-terminal Rossmann domain occupies 1 to 182 (MRVYYDSDAD…GGGRAGIIET (182 aa)). Residues 24 to 27 (YGSQ), arginine 48, serine 51, and 83 to 86 (DEGQ) each bind NADP(+). Histidine 108 is a catalytic residue. NADP(+) is bound at residue glycine 134. Residues 183–328 (TFKEECETDL…EKLRAMMPWI (146 aa)) form the KARI C-terminal knotted domain. Aspartate 191, glutamate 195, glutamate 227, and glutamate 231 together coordinate Mg(2+). Serine 252 contributes to the substrate binding site.

Belongs to the ketol-acid reductoisomerase family. Mg(2+) is required as a cofactor.

It carries out the reaction (2R)-2,3-dihydroxy-3-methylbutanoate + NADP(+) = (2S)-2-acetolactate + NADPH + H(+). The enzyme catalyses (2R,3R)-2,3-dihydroxy-3-methylpentanoate + NADP(+) = (S)-2-ethyl-2-hydroxy-3-oxobutanoate + NADPH + H(+). It participates in amino-acid biosynthesis; L-isoleucine biosynthesis; L-isoleucine from 2-oxobutanoate: step 2/4. The protein operates within amino-acid biosynthesis; L-valine biosynthesis; L-valine from pyruvate: step 2/4. Involved in the biosynthesis of branched-chain amino acids (BCAA). Catalyzes an alkyl-migration followed by a ketol-acid reduction of (S)-2-acetolactate (S2AL) to yield (R)-2,3-dihydroxy-isovalerate. In the isomerase reaction, S2AL is rearranged via a Mg-dependent methyl migration to produce 3-hydroxy-3-methyl-2-ketobutyrate (HMKB). In the reductase reaction, this 2-ketoacid undergoes a metal-dependent reduction by NADPH to yield (R)-2,3-dihydroxy-isovalerate. In Acidiphilium cryptum (strain JF-5), this protein is Ketol-acid reductoisomerase (NADP(+)).